Consider the following 753-residue polypeptide: Catalase-peroxidase (753 aa).

Residues 90-238 (WHSAGTYRVT…LASSHMGLIY (149 aa)) constitute a cross-link (tryptophyl-tyrosyl-methioninium (Trp-Tyr) (with M-264)). The active-site Proton acceptor is the His-91. Positions 196–220 (SEGQEGHEGHGVVQGDESKKQHTDI) are disordered. Positions 238 to 264 (YVNPEGPDGIPDPVASAKDIRVTFGRM) form a cross-link, tryptophyl-tyrosyl-methioninium (Tyr-Met) (with W-90). Position 279 (His-279) interacts with heme b.

Belongs to the peroxidase family. Peroxidase/catalase subfamily. As to quaternary structure, homodimer or homotetramer. Heme b is required as a cofactor. Formation of the three residue Trp-Tyr-Met cross-link is important for the catalase, but not the peroxidase activity of the enzyme.

It localises to the cytoplasm. It catalyses the reaction H2O2 + AH2 = A + 2 H2O. The enzyme catalyses 2 H2O2 = O2 + 2 H2O. With respect to regulation, inhibited by KCN. In terms of biological role, bifunctional enzyme with both catalase and broad-spectrum peroxidase activity. This chain is Catalase-peroxidase, found in Neurospora crassa (strain ATCC 24698 / 74-OR23-1A / CBS 708.71 / DSM 1257 / FGSC 987).